The chain runs to 68 residues: Large ribosomal subunit protein bL32 (68 aa).

The protein belongs to the bacterial ribosomal protein bL32 family.

This is Large ribosomal subunit protein bL32 from Ruegeria pomeroyi (strain ATCC 700808 / DSM 15171 / DSS-3) (Silicibacter pomeroyi).